The sequence spans 180 residues: Large ribosomal subunit protein uL5 (180 aa).

It belongs to the universal ribosomal protein uL5 family. Part of the 50S ribosomal subunit; part of the 5S rRNA/L5/L18/L25 subcomplex. Contacts the 5S rRNA and the P site tRNA. Forms a bridge to the 30S subunit in the 70S ribosome.

Its function is as follows. This is one of the proteins that bind and probably mediate the attachment of the 5S RNA into the large ribosomal subunit, where it forms part of the central protuberance. In the 70S ribosome it contacts protein S13 of the 30S subunit (bridge B1b), connecting the 2 subunits; this bridge is implicated in subunit movement. Contacts the P site tRNA; the 5S rRNA and some of its associated proteins might help stabilize positioning of ribosome-bound tRNAs. The sequence is that of Large ribosomal subunit protein uL5 from Cupriavidus metallidurans (strain ATCC 43123 / DSM 2839 / NBRC 102507 / CH34) (Ralstonia metallidurans).